A 316-amino-acid chain; its full sequence is Probable prolyl 4-hydroxylase 7 (316 aa).

At 1-4 (MDSR) the chain is on the cytoplasmic side. A helical; Signal-anchor for type II membrane protein transmembrane segment spans residues 5-24 (IFLAFSLCFLFTLPLISSAP). Residues 25–316 (NRFLTRSSNT…CRKSCKACSS (292 aa)) lie on the Lumenal side of the membrane. N-linked (GlcNAc...) asparagine glycosylation is present at asparagine 96. The region spanning 139 to 261 (NGESMQILHY…KWSATRWIHV (123 aa)) is the Fe2OG dioxygenase domain. Positions 157 and 159 each coordinate Fe cation. N-linked (GlcNAc...) asparagine glycosylation is present at asparagine 233. Histidine 242 provides a ligand contact to Fe cation. Lysine 252 provides a ligand contact to 2-oxoglutarate. Residues 274-314 (CMDENVSCEKWAKAGECQKNPTYMVGSDKDHGYCRKSCKAC) enclose the ShKT domain. Cystine bridges form between cysteine 274–cysteine 314, cysteine 281–cysteine 307, and cysteine 290–cysteine 311. A glycan (N-linked (GlcNAc...) asparagine) is linked at asparagine 278.

It belongs to the P4HA family. The cofactor is Fe(2+). Requires L-ascorbate as cofactor.

It localises to the endoplasmic reticulum membrane. It carries out the reaction L-prolyl-[collagen] + 2-oxoglutarate + O2 = trans-4-hydroxy-L-prolyl-[collagen] + succinate + CO2. Its function is as follows. Catalyzes the post-translational formation of 4-hydroxyproline in -Xaa-Pro-Gly- sequences in proline-rich peptide sequences of plant glycoproteins and other proteins. Hydroxyprolines are important constituent of many plant cell wall glycoproteins such as extensins, hydroxyproline-rich glycoproteins, lectins and arabinogalactan proteins. The chain is Probable prolyl 4-hydroxylase 7 from Arabidopsis thaliana (Mouse-ear cress).